The chain runs to 356 residues: Histidinol-phosphate aminotransferase 1 (356 aa).

Residue lysine 217 is modified to N6-(pyridoxal phosphate)lysine.

Belongs to the class-II pyridoxal-phosphate-dependent aminotransferase family. Histidinol-phosphate aminotransferase subfamily. As to quaternary structure, homodimer. Pyridoxal 5'-phosphate is required as a cofactor.

It catalyses the reaction L-histidinol phosphate + 2-oxoglutarate = 3-(imidazol-4-yl)-2-oxopropyl phosphate + L-glutamate. The protein operates within amino-acid biosynthesis; L-histidine biosynthesis; L-histidine from 5-phospho-alpha-D-ribose 1-diphosphate: step 7/9. In Burkholderia mallei (strain ATCC 23344), this protein is Histidinol-phosphate aminotransferase 1.